The sequence spans 374 residues: N5-carboxyaminoimidazole ribonucleotide synthase (374 aa).

Residues arginine 108, lysine 148, 153–159 (GYDGKGQ), 183–186 (EKYL), glutamate 191, histidine 214, and 266–267 (NE) each bind ATP. One can recognise an ATP-grasp domain in the interval 112 to 296 (KETLKSAGTK…QFDTHILAVT (185 aa)).

It belongs to the PurK/PurT family. Homodimer.

The catalysed reaction is 5-amino-1-(5-phospho-beta-D-ribosyl)imidazole + hydrogencarbonate + ATP = 5-carboxyamino-1-(5-phospho-D-ribosyl)imidazole + ADP + phosphate + 2 H(+). The protein operates within purine metabolism; IMP biosynthesis via de novo pathway; 5-amino-1-(5-phospho-D-ribosyl)imidazole-4-carboxylate from 5-amino-1-(5-phospho-D-ribosyl)imidazole (N5-CAIR route): step 1/2. In terms of biological role, catalyzes the ATP-dependent conversion of 5-aminoimidazole ribonucleotide (AIR) and HCO(3)(-) to N5-carboxyaminoimidazole ribonucleotide (N5-CAIR). The polypeptide is N5-carboxyaminoimidazole ribonucleotide synthase (Staphylococcus aureus (strain Mu50 / ATCC 700699)).